Here is a 282-residue protein sequence, read N- to C-terminus: Homeobox protein pv.1 (282 aa).

2 stretches are compositionally biased toward basic and acidic residues: residues glutamate 17–methionine 26 and tyrosine 44–glutamate 59. Residues glutamate 17 to leucine 128 form a disordered region. Composition is skewed to polar residues over residues tryptophan 86–glycine 96 and glutamate 103–glutamate 114. The segment covering glutamate 116–leucine 128 has biased composition (basic and acidic residues). A DNA-binding region (homeobox) is located at residues glutamine 129–isoleucine 188.

Expressed in the ventral marginal zone of blastulae. At early gastrulation, expression begins to spread to the animal pole (ectoderm), and at stage 11.5 is expressed in a gradient across the animal cap, with levels highest in the ventral region. At the end of gastrulation, predominantly localized to the ventral and lateral regions of the closing slit blastopore. Also expressed at a low level in ventral endoderm.

The protein localises to the nucleus. Functionally, transcriptional repressor. Acts in a ventral signaling pathway downstream of bmp4, which suppresses dorsal mesoderm formation and leads to both ventral mesoderm and ventral ectoderm formation. Acts in the ectoderm to simultaneously specify epidermal lineages and restrict neuralization. Represses transcription of dorsal-specific genes. Binds to DNA, with preference for the target sequences 5'-TAATGC-3' and 5'-TAATTG-3'. Acts in a pathway downstream of bmp4 and fgf to negatively regulate erythroid specification. The sequence is that of Homeobox protein pv.1 from Xenopus laevis (African clawed frog).